A 244-amino-acid polypeptide reads, in one-letter code: Type I iodothyronine deiodinase (244 aa).

The Extracellular segment spans residues 1–12 (MGLSQLGLWLRR). The helical; Signal-anchor for type III membrane protein transmembrane segment at 13–33 (LWVLFQVALQVAVGKVFLILF) threads the bilayer. The Cytoplasmic portion of the chain corresponds to 34 to 244 (PSRVKQHIVA…VRAVLEKLHS (211 aa)). Selenocysteine 121 is a catalytic residue. Selenocysteine 121 is a non-standard amino acid (selenocysteine).

Belongs to the iodothyronine deiodinase family. In terms of assembly, predominantly monomer. Can form homodimers but homodimerization is not essential for enzyme activity.

It localises to the cell membrane. It is found in the endoplasmic reticulum membrane. The protein resides in the basolateral cell membrane. The catalysed reaction is 3,3',5-triiodo-L-thyronine + iodide + A + H(+) = L-thyroxine + AH2. The enzyme catalyses 3,3',5'-triiodo-L-thyronine + iodide + A + H(+) = L-thyroxine + AH2. It catalyses the reaction 3,3'-diiodo-L-thyronine + iodide + A + H(+) = 3,3',5'-triiodo-L-thyronine + AH2. It carries out the reaction 3,3'-diiodo-L-thyronine + iodide + A + H(+) = 3,3',5-triiodo-L-thyronine + AH2. The catalysed reaction is 3'-iodo-L-thyronine + iodide + A + H(+) = 3',5'-diiodo-L-thyronine + AH2. The enzyme catalyses 3-iodo-L-thyronine + iodide + A + H(+) = 3,5-diiodo-L-thyronine + AH2. It catalyses the reaction 3-iodo-L-thyronine + iodide + A + H(+) = 3,3'-diiodo-L-thyronine + AH2. It carries out the reaction 3,3'-diiodothyronamine + iodide + A + H(+) = 3,3',5'-triiodothyronamine + AH2. The catalysed reaction is 3'-iodothyronamine + iodide + A + H(+) = 3',5'-diiodothyronamine + AH2. The enzyme catalyses 3-iodothyronamine + iodide + A + H(+) = 3,3'-diiodothyronamine + AH2. It catalyses the reaction 3,3'-diiodothyronamine + iodide + A + H(+) = 3,3',5-triiodothyronamine + AH2. It carries out the reaction 3-iodothyronamine + iodide + A + H(+) = 3,5-diiodothyronamine + AH2. The catalysed reaction is 3,3'-diiodo-L-thyronine sulfate + iodide + A + H(+) = 3,3',5'-triiodo-L-thyronine sulfate + AH2. The enzyme catalyses 3,3',5'-triiodo-L-thyronine sulfate + iodide + A + H(+) = L-thyroxine sulfate + AH2. It catalyses the reaction 3,3'-diiodo-L-thyronine sulfate + iodide + A + H(+) = 3,3',5-triiodo-L-thyronine sulfate + AH2. Plays a crucial role in the metabolism of thyroid hormones (TH) and has specific roles in TH activation and inactivation by deiodination. Catalyzes the deiodination of L-thyroxine (T4) to 3,5,3'-triiodothyronine (T3) and 3',5'-diiodothyronine (3',5'-T2) to 3'-monoiodothyronine (3'-T1) via outer-ring deiodination (ORD). Catalyzes the deiodination of T4 to 3,3',5'-triiodothyronine (rT3), T3 to 3,3'-diiodothyronine (3,3'-T2), 3,5-diiodothyronine (3,5-T2) to 3-monoiodothyronine (3-T1) and 3,3'-T2 to 3-T1 via inner-ring deiodination (IRD). Catalyzes the deiodination of rT3 to 3,3'-T2 via ORD. Catalyzes the phenolic ring deiodinations of 3,3',5'-triiodothyronamine, 3',5'-diiodothyronamine and 3,3'-diiodothyronamine as well as tyrosyl ring deiodinations of 3,5,3'-triiodothyronamine and 3,5-diiodothyronamine. Catalyzes the deiodination of L-thyroxine sulfate and 3,3',5-triiodo-L-thyronine sulfate via IRD and of 3,3',5'-triiodo-L-thyronine sulfate via ORD. In Felis catus (Cat), this protein is Type I iodothyronine deiodinase (DIO1).